The primary structure comprises 792 residues: Probable CoA-transferase Rv1866 (792 aa).

The active-site Nucleophile is the Asp-558.

The protein belongs to the CoA-transferase III family.

Its function is as follows. Probable CoA-transferase. The polypeptide is Probable CoA-transferase Rv1866 (Mycobacterium tuberculosis (strain ATCC 25618 / H37Rv)).